We begin with the raw amino-acid sequence, 765 residues long: Palmitoyltransferase ZDHHC8 (765 aa).

The Cytoplasmic portion of the chain corresponds to 1 to 13 (MPRSPGTRLKPAK). The chain crosses the membrane as a helical span at residues 14-34 (YIPVATAAALLVGSSTLFFVF). At 35 to 52 (TCPWLTRAVSPAVPVYNG) the chain is on the lumenal side. Residues 53–73 (IIFLFVLANFSMATFMDPGVF) traverse the membrane as a helical segment. Residues 74–148 (PRADEDEDKE…NCIGRRNYRY (75 aa)) are Cytoplasmic-facing. One can recognise a DHHC domain in the interval 104–154 (KWCATCHFYRPPRCSHCSVCDNCVEDFDHHCPWVNNCIGRRNYRYFFLFLL). Cysteine 134 acts as the S-palmitoyl cysteine intermediate in catalysis. Residues 149-169 (FFLFLLSLSAHMVGVVAFGLV) traverse the membrane as a helical segment. Residues 170 to 190 (YVLNHAEGLGAAHTTITMAVM) are Lumenal-facing. The chain crosses the membrane as a helical span at residues 191 to 211 (CVAGLFFIPVIGLTGFHVVLV). Topologically, residues 212–765 (TRGRTTNEQV…VGGTTYEISV (554 aa)) are cytoplasmic. The tract at residues 293–352 (GLGRSKSKGSLDRLDEKPLDLGPPLPPKIEAGTFSSDLQTPRPGSAESALSVQRTSPPTP) is disordered. Residues 301–311 (GSLDRLDEKPL) show a composition bias toward basic and acidic residues. A Phosphoserine modification is found at serine 337. Arginine 441 is modified (omega-N-methylarginine). Residues 509–540 (LHPGATGDPPRPLPRSFSPVLGPRPREPSPVR) are disordered. Phosphoserine is present on residues serine 606, serine 627, serine 675, serine 682, serine 725, and serine 743. The segment at 613–747 (GPGFGGARNP…PGPSASPTRH (135 aa)) is disordered. The segment covering 622–653 (PALQTSLSSLSSSVSRAPRTSSSSLQADQASS) has biased composition (low complexity).

This sequence belongs to the DHHC palmitoyltransferase family. ERF2/ZDHHC9 subfamily. Widely expressed.

The protein localises to the golgi apparatus membrane. Its subcellular location is the mitochondrion membrane. It carries out the reaction L-cysteinyl-[protein] + hexadecanoyl-CoA = S-hexadecanoyl-L-cysteinyl-[protein] + CoA. Its function is as follows. Palmitoyltransferase that catalyzes the addition of palmitate onto various protein substrates and therefore functions in several unrelated biological processes. Through the palmitoylation of ABCA1 regulates the localization of the transporter to the plasma membrane and thereby regulates its function in cholesterol and phospholipid efflux. Could also pamitoylate the D(2) dopamine receptor DRD2 and regulate its stability and localization to the plasma membrane. Could also play a role in glutamatergic transmission. (Microbial infection) Able to palmitoylate SARS coronavirus-2/SARS-CoV-2 spike protein following its synthesis in the endoplasmic reticulum (ER). In the infected cell, promotes spike biogenesis by protecting it from premature ER degradation, increases half-life and controls the lipid organization of its immediate membrane environment. Once the virus has formed, spike palmitoylation controls fusion with the target cell. The sequence is that of Palmitoyltransferase ZDHHC8 from Homo sapiens (Human).